A 260-amino-acid chain; its full sequence is Neuraminyllactose-binding hemagglutinin (260 aa).

The signal sequence occupies residues 1–27 (MRANNHFKDFAWKKCLLGASVVALLVG). Cys28 is lipidated: N-palmitoyl cysteine. A lipid anchor (S-diacylglycerol cysteine) is attached at Cys28. The tract at residues 134 to 139 (KRTIQK) is N-acetyl-neuraminyl-alpha(2,3)-lactose binding motif.

It localises to the cell outer membrane. This Helicobacter pylori (Campylobacter pylori) protein is Neuraminyllactose-binding hemagglutinin (hpaA).